The sequence spans 466 residues: ATP synthase subunit beta (466 aa).

Residue 153 to 160 (GGAGVGKT) coordinates ATP.

Belongs to the ATPase alpha/beta chains family. In terms of assembly, F-type ATPases have 2 components, CF(1) - the catalytic core - and CF(0) - the membrane proton channel. CF(1) has five subunits: alpha(3), beta(3), gamma(1), delta(1), epsilon(1). CF(0) has three main subunits: a(1), b(2) and c(9-12). The alpha and beta chains form an alternating ring which encloses part of the gamma chain. CF(1) is attached to CF(0) by a central stalk formed by the gamma and epsilon chains, while a peripheral stalk is formed by the delta and b chains.

It is found in the cell membrane. It catalyses the reaction ATP + H2O + 4 H(+)(in) = ADP + phosphate + 5 H(+)(out). Functionally, produces ATP from ADP in the presence of a proton gradient across the membrane. The catalytic sites are hosted primarily by the beta subunits. In Clostridium acetobutylicum (strain ATCC 824 / DSM 792 / JCM 1419 / IAM 19013 / LMG 5710 / NBRC 13948 / NRRL B-527 / VKM B-1787 / 2291 / W), this protein is ATP synthase subunit beta.